The sequence spans 328 residues: Pantothenate kinase (328 aa).

Positions M1–P12 are enriched in polar residues. The segment at M1 to S22 is disordered. G113–S120 is an ATP binding site.

Belongs to the prokaryotic pantothenate kinase family.

The protein localises to the cytoplasm. The enzyme catalyses (R)-pantothenate + ATP = (R)-4'-phosphopantothenate + ADP + H(+). It functions in the pathway cofactor biosynthesis; coenzyme A biosynthesis; CoA from (R)-pantothenate: step 1/5. In Corynebacterium efficiens (strain DSM 44549 / YS-314 / AJ 12310 / JCM 11189 / NBRC 100395), this protein is Pantothenate kinase.